The primary structure comprises 82 residues: ATP synthase subunit c (82 aa).

Transmembrane regions (helical) follow at residues 7–27 and 57–77; these read AASVVAAGLAVGLGAIGPGIG and FAFMESLTIYGLVVALVLLFA.

It belongs to the ATPase C chain family. In terms of assembly, F-type ATPases have 2 components, F(1) - the catalytic core - and F(0) - the membrane proton channel. F(1) has five subunits: alpha(3), beta(3), gamma(1), delta(1), epsilon(1). F(0) has four main subunits: a(1), b(1), b'(1) and c(10-14). The alpha and beta chains form an alternating ring which encloses part of the gamma chain. F(1) is attached to F(0) by a central stalk formed by the gamma and epsilon chains, while a peripheral stalk is formed by the delta, b and b' chains.

It localises to the cellular thylakoid membrane. In terms of biological role, f(1)F(0) ATP synthase produces ATP from ADP in the presence of a proton or sodium gradient. F-type ATPases consist of two structural domains, F(1) containing the extramembraneous catalytic core and F(0) containing the membrane proton channel, linked together by a central stalk and a peripheral stalk. During catalysis, ATP synthesis in the catalytic domain of F(1) is coupled via a rotary mechanism of the central stalk subunits to proton translocation. Key component of the F(0) channel; it plays a direct role in translocation across the membrane. A homomeric c-ring of between 10-14 subunits forms the central stalk rotor element with the F(1) delta and epsilon subunits. The protein is ATP synthase subunit c of Prochlorococcus marinus (strain NATL1A).